The following is a 391-amino-acid chain: S-adenosylmethionine synthase (391 aa).

His14 lines the ATP pocket. Asp16 contacts Mg(2+). Residue Glu42 participates in K(+) binding. Residues Glu55 and Gln98 each coordinate L-methionine. Residues Gln98–Glu108 are flexible loop. Residues Asp172–Lys174, Arg238–Phe239, Asp247, Arg253–Lys254, Ala270, and Lys274 each bind ATP. Residue Asp247 coordinates L-methionine. Lys278 lines the L-methionine pocket.

It belongs to the AdoMet synthase family. As to quaternary structure, homotetramer; dimer of dimers. Mg(2+) serves as cofactor. It depends on K(+) as a cofactor.

The protein localises to the cytoplasm. The enzyme catalyses L-methionine + ATP + H2O = S-adenosyl-L-methionine + phosphate + diphosphate. Its pathway is amino-acid biosynthesis; S-adenosyl-L-methionine biosynthesis; S-adenosyl-L-methionine from L-methionine: step 1/1. Catalyzes the formation of S-adenosylmethionine (AdoMet) from methionine and ATP. The overall synthetic reaction is composed of two sequential steps, AdoMet formation and the subsequent tripolyphosphate hydrolysis which occurs prior to release of AdoMet from the enzyme. The polypeptide is S-adenosylmethionine synthase (Clostridium botulinum (strain Alaska E43 / Type E3)).